A 552-amino-acid chain; its full sequence is Leucine-rich repeat-containing protein 31 (552 aa).

The segment at 1–65 (MSQTRKKTSS…SETAKPLSSE (65 aa)) is disordered. Basic and acidic residues predominate over residues 31 to 41 (ESRKEDNDLKT). The span at 42-58 (SDSQPSDWIQKTATSET) shows a compositional bias: polar residues. 9 LRR repeats span residues 227–246 (SLEV…LNSI), 255–275 (NLKV…KILD), 283–293 (ELRKLDLSCNK), 311–331 (HLQV…MSLT), 339–360 (NLQE…NLLS), 367–387 (ALKS…TALA), 395–415 (ALEV…KLLL), 423–443 (SLQV…ALLA), and 453–475 (KLQK…MFCQ).

This is Leucine-rich repeat-containing protein 31 (LRRC31) from Homo sapiens (Human).